The sequence spans 462 residues: Cathepsin F (462 aa).

The first 19 residues, 1–19, serve as a signal peptide directing secretion; sequence MAPLLQLLWLLTLLSTVAL. Residues 20–248 constitute a propeptide, activation peptide; that stretch reads SPVPAKPWAD…MSPAKSINDL (229 aa). Residues N35, N138, and N173 are each glycosylated (N-linked (GlcNAc...) asparagine). 2 disulfides stabilise this stretch: C270–C311 and C304–C344. C273 is an active-site residue. N-linked (GlcNAc...) asparagine glycosylation is found at N345 and N356. A disulfide bond links C402 and C450. H409 is an active-site residue. N-linked (GlcNAc...) asparagine glycosylation occurs at N418. Residue N429 is part of the active site.

This sequence belongs to the peptidase C1 family.

Its subcellular location is the lysosome. It carries out the reaction The recombinant enzyme cleaves synthetic substrates with Phe and Leu (better than Val) in P2, with high specificity constant (kcat/Km) comparable to that of cathepsin L.. Functionally, thiol protease which is believed to participate in intracellular degradation and turnover of proteins. Has also been implicated in tumor invasion and metastasis. In Mus musculus (Mouse), this protein is Cathepsin F (Ctsf).